Consider the following 417-residue polypeptide: Gamma-glutamyl phosphate reductase (417 aa).

Belongs to the gamma-glutamyl phosphate reductase family.

It is found in the cytoplasm. The enzyme catalyses L-glutamate 5-semialdehyde + phosphate + NADP(+) = L-glutamyl 5-phosphate + NADPH + H(+). Its pathway is amino-acid biosynthesis; L-proline biosynthesis; L-glutamate 5-semialdehyde from L-glutamate: step 2/2. Catalyzes the NADPH-dependent reduction of L-glutamate 5-phosphate into L-glutamate 5-semialdehyde and phosphate. The product spontaneously undergoes cyclization to form 1-pyrroline-5-carboxylate. This is Gamma-glutamyl phosphate reductase from Erwinia tasmaniensis (strain DSM 17950 / CFBP 7177 / CIP 109463 / NCPPB 4357 / Et1/99).